We begin with the raw amino-acid sequence, 544 residues long: CTP synthase (544 aa).

The segment at 1-265 (MTRYIFITGG…DTQVLAYFGL (265 aa)) is amidoligase domain. S13 provides a ligand contact to CTP. Residue S13 participates in UTP binding. Residue 14-19 (SLGKGL) participates in ATP binding. Y54 is an L-glutamine binding site. D71 is an ATP binding site. Positions 71 and 139 each coordinate Mg(2+). Residues 146–148 (DIE), 186–191 (KTKPTQ), and K222 contribute to the CTP site. UTP contacts are provided by residues 186–191 (KTKPTQ) and K222. V240 serves as a coordination point for ATP. A Glutamine amidotransferase type-1 domain is found at 291–543 (TIAVVGKYTS…IKAAIEQSRL (253 aa)). G353 provides a ligand contact to L-glutamine. Catalysis depends on C380, which acts as the Nucleophile; for glutamine hydrolysis. L-glutamine contacts are provided by residues 381–384 (FGMQ), E404, and R472. Catalysis depends on residues H516 and E518.

Belongs to the CTP synthase family. As to quaternary structure, homotetramer.

The catalysed reaction is UTP + L-glutamine + ATP + H2O = CTP + L-glutamate + ADP + phosphate + 2 H(+). It catalyses the reaction L-glutamine + H2O = L-glutamate + NH4(+). The enzyme catalyses UTP + NH4(+) + ATP = CTP + ADP + phosphate + 2 H(+). Its pathway is pyrimidine metabolism; CTP biosynthesis via de novo pathway; CTP from UDP: step 2/2. Its activity is regulated as follows. Allosterically activated by GTP, when glutamine is the substrate; GTP has no effect on the reaction when ammonia is the substrate. The allosteric effector GTP functions by stabilizing the protein conformation that binds the tetrahedral intermediate(s) formed during glutamine hydrolysis. Inhibited by the product CTP, via allosteric rather than competitive inhibition. Functionally, catalyzes the ATP-dependent amination of UTP to CTP with either L-glutamine or ammonia as the source of nitrogen. Regulates intracellular CTP levels through interactions with the four ribonucleotide triphosphates. This chain is CTP synthase, found in Azospirillum brasilense.